The following is a 126-amino-acid chain: Histone H2B 1.2 (126 aa).

Positions 1–12 (MPEPAKSAPAPK) are enriched in low complexity. The segment at 1–35 (MPEPAKSAPAPKKGSKKAVTKTPKKDGKKRRKSRK) is disordered. 2 positions are modified to N6-acetyllysine: Lys-6 and Lys-13. A Phosphoserine modification is found at Ser-15. Residues Lys-16 and Lys-21 each carry the N6-acetyllysine modification. The O-linked (GlcNAc) serine glycan is linked to Ser-113. Lys-121 participates in a covalent cross-link: Glycyl lysine isopeptide (Lys-Gly) (interchain with G-Cter in ubiquitin).

The protein belongs to the histone H2B family. As to quaternary structure, the nucleosome is a histone octamer containing two molecules each of H2A, H2B, H3 and H4 assembled in one H3-H4 heterotetramer and two H2A-H2B heterodimers. The octamer wraps approximately 147 bp of DNA. Post-translationally, monoubiquitination of Lys-121 by BRE1 gives a specific tag for epigenetic transcriptional activation and is also prerequisite for histone H3 'Lys-4' and 'Lys-79' methylation. In terms of processing, phosphorylated on Ser-15 during developmentally programmed apoptosis; which may facilitate apoptotic chromatin condensation. GlcNAcylation at Ser-113 promotes monoubiquitination of Lys-121. It fluctuates in response to extracellular glucose, and associates with transcribed genes.

The protein resides in the nucleus. It is found in the chromosome. Core component of nucleosome. Nucleosomes wrap and compact DNA into chromatin, limiting DNA accessibility to the cellular machineries which require DNA as a template. Histones thereby play a central role in transcription regulation, DNA repair, DNA replication and chromosomal stability. DNA accessibility is regulated via a complex set of post-translational modifications of histones, also called histone code, and nucleosome remodeling. This chain is Histone H2B 1.2, found in Xenopus laevis (African clawed frog).